Consider the following 683-residue polypeptide: Probable serine/threonine-protein kinase HAL5-like (683 aa).

Disordered stretches follow at residues 1 to 90 and 157 to 200; these read MPQQ…VSDE and YPQN…SKKA. The span at 36–48 shows a compositional bias: low complexity; that stretch reads PSSAATSDSSEMS. Residues 50–60 are compositionally biased toward gly residues; it reads AQGGRGNGLLG. Over residues 69 to 85 the composition is skewed to polar residues; that stretch reads SPKSEAQFTQRNKSAES. Residues 364-670 enclose the Protein kinase domain; sequence GKCIGMIGQG…IPKLLDTPWM (307 aa). ATP contacts are provided by residues 370-378 and K411; that span reads IGQGAYGTV. The Proton acceptor role is filled by D521.

This sequence belongs to the protein kinase superfamily. CAMK Ser/Thr protein kinase family. NPR/HAL subfamily. HAL5 sub-subfamily.

It carries out the reaction L-seryl-[protein] + ATP = O-phospho-L-seryl-[protein] + ADP + H(+). It catalyses the reaction L-threonyl-[protein] + ATP = O-phospho-L-threonyl-[protein] + ADP + H(+). The protein is Probable serine/threonine-protein kinase HAL5-like of Eremothecium gossypii (strain ATCC 10895 / CBS 109.51 / FGSC 9923 / NRRL Y-1056) (Yeast).